Here is a 350-residue protein sequence, read N- to C-terminus: Twinfilin-1 (350 aa).

At Ser2 the chain carries N-acetylserine. An ADF-H 1 domain is found at 2-139 (SHQTGIQASE…SLHGYRKYLL (138 aa)). Phosphoserine is present on residues Ser143 and Ser277. One can recognise an ADF-H 2 domain in the interval 175 to 313 (LQGVAFPISR…TADFLYDEVH (139 aa)). At Tyr309 the chain carries Phosphotyrosine. Positions 316–350 (QHAHKQSFAKPKGPAGKRGIRRLIRGPAEAEATTD) are disordered. A Phosphothreonine modification is found at Thr349.

This sequence belongs to the actin-binding proteins ADF family. Twinfilin subfamily. As to quaternary structure, interacts with G-actin; ADP-actin form and capping protein (CP). May also be able to interact with TWF2 and phosphoinositides, PI(4,5)P2. When bound to PI(4,5)P2, it is down-regulated. Interacts with ACTG1. In terms of processing, phosphorylated on serine and threonine residues.

It localises to the cytoplasm. The protein localises to the cytoskeleton. Its function is as follows. Actin-binding protein involved in motile and morphological processes. Inhibits actin polymerization, likely by sequestering G-actin. By capping the barbed ends of filaments, it also regulates motility. Seems to play an important role in clathrin-mediated endocytosis and distribution of endocytic organelles. The protein is Twinfilin-1 (Twf1) of Rattus norvegicus (Rat).